A 144-amino-acid chain; its full sequence is Superoxide dismutase [Mn] (144 aa).

The tract at residues 1-22 (GYVNGLESAEETLAENRESGDF) is disordered. Histidine 42, aspartate 124, and histidine 128 together coordinate Mn(2+).

This sequence belongs to the iron/manganese superoxide dismutase family. Requires Mn(2+) as cofactor.

It carries out the reaction 2 superoxide + 2 H(+) = H2O2 + O2. Destroys superoxide anion radicals which are normally produced within the cells and which are toxic to biological systems. The polypeptide is Superoxide dismutase [Mn] (sod) (Haloarcula hispanica).